A 277-amino-acid polypeptide reads, in one-letter code: Basic leucine zipper 9 (277 aa).

The disordered stretch occupies residues Ala73 to Lys141. A Phosphoserine modification is found at Ser100. Residues Ala109–Pro118 are compositionally biased toward polar residues. A bZIP domain is found at Asp120–Leu183. The segment at Lys122–Lys141 is basic motif. Residues Ile124–Arg131 carry the Nuclear localization signal motif. The leucine-zipper stretch occupies residues Leu148–Leu162.

It belongs to the bZIP family. Homodimer. Interacts with BZIP1, BZIP2, BZIP10, BZIP11, BZIP25, BZIP44, BZIP53 and BZIP63. In terms of processing, phosphorylated. In terms of tissue distribution, expressed in roots, shoots, stems, young leaves, and flowers, mostly in vascular tissues (e.g. phloem).

It is found in the nucleus. Functionally, transcription factor. In Arabidopsis thaliana (Mouse-ear cress), this protein is Basic leucine zipper 9 (BZIP9).